The primary structure comprises 188 residues: ATP synthase subunit delta (188 aa).

It belongs to the ATPase delta chain family. In terms of assembly, F-type ATPases have 2 components, F(1) - the catalytic core - and F(0) - the membrane proton channel. F(1) has five subunits: alpha(3), beta(3), gamma(1), delta(1), epsilon(1). F(0) has three main subunits: a(1), b(2) and c(10-14). The alpha and beta chains form an alternating ring which encloses part of the gamma chain. F(1) is attached to F(0) by a central stalk formed by the gamma and epsilon chains, while a peripheral stalk is formed by the delta and b chains.

Its subcellular location is the cell inner membrane. Its function is as follows. F(1)F(0) ATP synthase produces ATP from ADP in the presence of a proton or sodium gradient. F-type ATPases consist of two structural domains, F(1) containing the extramembraneous catalytic core and F(0) containing the membrane proton channel, linked together by a central stalk and a peripheral stalk. During catalysis, ATP synthesis in the catalytic domain of F(1) is coupled via a rotary mechanism of the central stalk subunits to proton translocation. Functionally, this protein is part of the stalk that links CF(0) to CF(1). It either transmits conformational changes from CF(0) to CF(1) or is implicated in proton conduction. The sequence is that of ATP synthase subunit delta from Rhizobium etli (strain ATCC 51251 / DSM 11541 / JCM 21823 / NBRC 15573 / CFN 42).